A 560-amino-acid chain; its full sequence is Mannosyl-oligosaccharide 1,2-alpha-mannosidase MNS1 (560 aa).

Over 1–27 (MARSRSISGYGIWKYLNPAYYLRRPRR) the chain is Cytoplasmic. Residues 28–47 (LALLFIVFVSVSMLVWDRIN) traverse the membrane as a helical; Signal-anchor for type II membrane protein segment. Residues 47 to 80 (NLAREHEVEVFKLNEEVSRLEQMLEELNGGVGNK) are a coiled coil. Topologically, residues 48 to 560 (LAREHEVEVF…QRKFGHQINV (513 aa)) are lumenal. Glu179 acts as the Proton donor in catalysis. Asp312 is an active-site residue. The N-linked (GlcNAc...) asparagine glycan is linked to Asn326. Cys377 and Cys409 are joined by a disulfide. Residue Glu423 is the Proton donor of the active site. The active site involves Glu445. The N-linked (GlcNAc...) asparagine glycan is linked to Asn459. Thr529 lines the Ca(2+) pocket.

This sequence belongs to the glycosyl hydrolase 47 family. Requires Ca(2+) as cofactor. Mn(2+) serves as cofactor. Mg(2+) is required as a cofactor. As to expression, expressed in flowers, siliques, stems, leaves, roots, pollen grains, shoot apical meristems, hypocotyls and upper region of the root.

The protein resides in the golgi apparatus membrane. It catalyses the reaction N(4)-(alpha-D-Man-(1-&gt;2)-alpha-D-Man-(1-&gt;2)-alpha-D-Man-(1-&gt;3)-[alpha-D-Man-(1-&gt;2)-alpha-D-Man-(1-&gt;3)-[alpha-D-Man-(1-&gt;2)-alpha-D-Man-(1-&gt;6)]-alpha-D-Man-(1-&gt;6)]-beta-D-Man-(1-&gt;4)-beta-D-GlcNAc-(1-&gt;4)-beta-D-GlcNAc)-L-asparaginyl-[protein] (N-glucan mannose isomer 9A1,2,3B1,2,3) + 4 H2O = N(4)-(alpha-D-Man-(1-&gt;3)-[alpha-D-Man-(1-&gt;3)-[alpha-D-Man-(1-&gt;6)]-alpha-D-Man-(1-&gt;6)]-beta-D-Man-(1-&gt;4)-beta-D-GlcNAc-(1-&gt;4)-beta-D-GlcNAc)-L-asparaginyl-[protein] (N-glucan mannose isomer 5A1,2) + 4 beta-D-mannose. It carries out the reaction N(4)-(alpha-D-Man-(1-&gt;2)-alpha-D-Man-(1-&gt;2)-alpha-D-Man-(1-&gt;3)-[alpha-D-Man-(1-&gt;3)-[alpha-D-Man-(1-&gt;2)-alpha-D-Man-(1-&gt;6)]-alpha-D-Man-(1-&gt;6)]-beta-D-Man-(1-&gt;4)-beta-D-GlcNAc-(1-&gt;4)-beta-D-GlcNAc)-L-asparaginyl-[protein] (N-glucan mannose isomer 8A1,2,3B1,3) + 3 H2O = N(4)-(alpha-D-Man-(1-&gt;3)-[alpha-D-Man-(1-&gt;3)-[alpha-D-Man-(1-&gt;6)]-alpha-D-Man-(1-&gt;6)]-beta-D-Man-(1-&gt;4)-beta-D-GlcNAc-(1-&gt;4)-beta-D-GlcNAc)-L-asparaginyl-[protein] (N-glucan mannose isomer 5A1,2) + 3 beta-D-mannose. The enzyme catalyses N(4)-(alpha-D-Man-(1-&gt;2)-alpha-D-Man-(1-&gt;2)-alpha-D-Man-(1-&gt;3)-[alpha-D-Man-(1-&gt;2)-alpha-D-Man-(1-&gt;3)-[alpha-D-Man-(1-&gt;2)-alpha-D-Man-(1-&gt;6)]-alpha-D-Man-(1-&gt;6)]-beta-D-Man-(1-&gt;4)-beta-D-GlcNAc-(1-&gt;4)-beta-D-GlcNAc)-L-asparaginyl-[protein] (N-glucan mannose isomer 9A1,2,3B1,2,3) + H2O = N(4)-(alpha-D-Man-(1-&gt;2)-alpha-D-Man-(1-&gt;2)-alpha-D-Man-(1-&gt;3)-[alpha-D-Man-(1-&gt;3)-[alpha-D-Man-(1-&gt;2)-alpha-D-Man-(1-&gt;6)]-alpha-D-Man-(1-&gt;6)]-beta-D-Man-(1-&gt;4)-beta-D-GlcNAc-(1-&gt;4)-beta-D-GlcNAc)-L-asparaginyl-[protein] (N-glucan mannose isomer 8A1,2,3B1,3) + beta-D-mannose. It functions in the pathway protein modification; protein glycosylation. With respect to regulation, inhibited by kifunensine and 1-deoxymannojirimycin, but not by swainsonine. Its function is as follows. Class I alpha-mannosidase essential for early N-glycan processing. Progressively trims alpha-1,2-linked mannose residues. Produces Man(5)GlcNAc(2) from Man(8)GlcNAc(2), but only Man(6)GlcNAc(2) from Man(9)GlcNAc(2). Has difficulty acting on the terminal mannose of the b-branch. Involved in root development and cell wall biosynthesis. The polypeptide is Mannosyl-oligosaccharide 1,2-alpha-mannosidase MNS1 (MNS1) (Arabidopsis thaliana (Mouse-ear cress)).